A 327-amino-acid polypeptide reads, in one-letter code: Porphobilinogen deaminase (327 aa).

Cys-251 is subject to S-(dipyrrolylmethanemethyl)cysteine.

Belongs to the HMBS family. Requires dipyrromethane as cofactor.

It carries out the reaction 4 porphobilinogen + H2O = hydroxymethylbilane + 4 NH4(+). It participates in porphyrin-containing compound metabolism; protoporphyrin-IX biosynthesis; coproporphyrinogen-III from 5-aminolevulinate: step 2/4. Functionally, catalyzes the tetrapolymerization of the monopyrrole porphobilinogen (PBG) into the hydroxymethylbilane pre-uroporphyrinogen in several discrete steps. This is Porphobilinogen deaminase (HEM3) from Saccharomyces cerevisiae (strain ATCC 204508 / S288c) (Baker's yeast).